A 360-amino-acid polypeptide reads, in one-letter code: UPF0284 protein APE_2029.1 (360 aa).

It belongs to the UPF0284 family.

The protein is UPF0284 protein APE_2029.1 of Aeropyrum pernix (strain ATCC 700893 / DSM 11879 / JCM 9820 / NBRC 100138 / K1).